The following is a 1255-amino-acid chain: Structural polyprotein (1255 aa).

Residues 1 to 33 (MFPFQPMYPMQPMPYRNPFAAPRRPWFPRTDPF) form a necessary for nucleocapsid assembly and virus assembly region. Positions 33–68 (FLAMQVQELTRSMANLTFKQRREAPPEGPPAKKPKR) are host transcription inhibition. The short motif at 41 to 48 (LTRSMANL) is the Supraphysiological nuclear export signal element. Residues 44 to 119 (SMANLTFKQR…KKPGKRQRMV (76 aa)) form a disordered region. An N-linked (GlcNAc...) asparagine; by host glycan is attached at Asn-47. A Nuclear localization signal motif is present at residues 64–68 (KKPKR). Residues 80–92 (GKKKKNQGKKKAK) show a composition bias toward basic residues. Residues 91–127 (AKTGPPNPKAQNGNKKKTNKKPGKRQRMVMKLESDKT) form a binding to the viral RNA region. Residues Thr-93 and Thr-108 each carry the phosphothreonine modification. The span at 104-118 (NKKKTNKKPGKRQRM) shows a compositional bias: basic residues. The segment at 112-126 (PGKRQRMVMKLESDK) is ribosome-binding. Phosphoserine is present on Ser-124. The 150-residue stretch at 126–275 (KTFPIMLEGK…KYTPENCEQW (150 aa)) folds into the Peptidase S3 domain. Position 127 is a phosphothreonine (Thr-127). The active-site Charge relay system is His-152. The interval 168–173 (KKASKY) is interaction with spike glycoprotein E2. Catalysis depends on charge relay system residues Asp-174 and Ser-226. The interval 260 to 264 (EKGVT) is interaction with spike glycoprotein E2. The interval 276-287 (SLVTTMCLLANV) is functions as an uncleaved signal peptide for the precursor of protein E3/E2. Residues 276–701 (SLVTTMCLLA…HYYHRYPMST (426 aa)) are Extracellular-facing. 7 disulfides stabilise this stretch: Cys-282–Cys-291, Cys-353–Cys-457, Cys-356–Cys-361, Cys-424–Cys-438, Cys-485–Cys-600, Cys-534–Cys-560, and Cys-536–Cys-554. An N-linked (GlcNAc...) asparagine; by host glycan is attached at Asn-286. Asn-652 carries N-linked (GlcNAc...) asparagine; by host glycosylation. A helical transmembrane segment spans residues 702 to 722 (ILGLSICAAIVTVSIAASTWL). The Cytoplasmic segment spans residues 723 to 757 (LCKSRVSCLTPYRLTPNARMPLCLAVLCCARTARA). The segment at 725-729 (KSRVS) is interaction with the capsid protein. 3 S-palmitoyl cysteine; by host lipidation sites follow: Cys-730, Cys-750, and Cys-751. A transient transmembrane before p62-6K protein processing region spans residues 730–750 (CLTPYRLTPNARMPLCLAVLC). A disulfide bridge connects residues Cys-730 and Cys-751. At 758–772 (ETTWESLDHLWNNNQ) the chain is on the extracellular side. The helical transmembrane segment at 773–793 (QMFWIQLLIPLAALIVVTRLL) threads the bilayer. Residue Arg-794 is a topological domain, cytoplasmic. A helical transmembrane segment spans residues 795–815 (CVCCVVPFLVVAGAAGAGAYE). Over 816–1225 (HATTMPSQAG…SKTAWTWLTS (410 aa)) the chain is Extracellular. Disulfide bonds link Cys-862–Cys-927, Cys-875–Cys-907, Cys-876–Cys-909, and Cys-881–Cys-891. The E1 fusion peptide loop stretch occupies residues 897–914 (VYPFMWGGAYCFCDTENT). 2 N-linked (GlcNAc...) asparagine; by host glycosylation sites follow: Asn-947 and Asn-1083. Intrachain disulfides connect Cys-1072–Cys-1084, Cys-1114–Cys-1189, Cys-1119–Cys-1193, and Cys-1141–Cys-1183. A helical transmembrane segment spans residues 1226 to 1246 (LLGGSAVIIIIGLVLATIVAM). Residues 1247-1255 (YVLTNQKHN) are Cytoplasmic-facing.

Homodimer. Homomultimer. Interacts with host karyopherin KPNA4; this interaction allows the nuclear import of the viral capsid protein. Interacts with spike glycoprotein E2. Interacts with host IRAK1; the interaction leads to inhibition of IRAK1-dependent signaling. Part of a tetrameric complex composed of host CRM1, host importin alpha/beta dimer and the viral capsid; this complex blocks the receptor-mediated transport through the nuclear pore. Interacts with host phosphatase PPP1CA; this interaction dephosphorylates the capsid protein, which increases its ability to bind to the viral genome. In terms of assembly, the precursor of protein E3/E2 and E1 form a heterodimer shortly after synthesis. As to quaternary structure, interacts with spike glycoprotein E2. The precursor of protein E3/E2 and E1 form a heterodimer shortly after synthesis. Processing of the precursor of protein E3/E2 into E2 and E3 results in a heterodimer of the spike glycoproteins E2 and E1. Spike at virion surface are constituted of three E2-E1 heterodimers. After target cell attachment and endocytosis, E1 change conformation to form homotrimers. Interacts with 6K protein. Interacts with host LDLRAD3; this interaction mediates viral entry to the host cell. Interacts with spike glycoprotein E1. Processing of the precursor of protein E3/E2 into E2 and E3 results in a heterodimer of the spike glycoproteins E2 and E1. Spike at virion surface are constituted of a trimer of E2-E1 heterodimers. Interacts with 6K protein. Interacts with host LDLRAD3; this interaction mediates viral entry to the host cell. In terms of assembly, oligomer. Interacts with spike glycoprotein E1. Interacts with spike glycoprotein E2. In terms of processing, structural polyprotein: Specific enzymatic cleavages in vivo yield mature proteins. Capsid protein is auto-cleaved during polyprotein translation, unmasking a signal peptide at the N-terminus of the precursor of E3/E2. The remaining polyprotein is then targeted to the host endoplasmic reticulum, where host signal peptidase cleaves it into pE2, 6K and E1 proteins. pE2 is further processed to mature E3 and E2 by host furin in trans-Golgi vesicle. Phosphorylated on serine and threonine residues. Post-translationally, palmitoylated via thioester bonds. These palmitoylations may induce disruption of the C-terminus transmembrane. This would result in the reorientation of E2 C-terminus from lumenal to cytoplasmic side. In terms of processing, N-glycosylated. Palmitoylated via thioester bonds.

The protein localises to the virion. It is found in the host cytoplasm. The protein resides in the host cell membrane. Its subcellular location is the host nucleus. It localises to the virion membrane. The protein localises to the host Golgi apparatus. It is found in the host trans-Golgi network. The protein resides in the host endoplasmic reticulum. It catalyses the reaction Autocatalytic release of the core protein from the N-terminus of the togavirus structural polyprotein by hydrolysis of a -Trp-|-Ser- bond.. In terms of biological role, forms an icosahedral capsid with a T=4 symmetry composed of 240 copies of the capsid protein surrounded by a lipid membrane through which penetrate 80 spikes composed of trimers of E1-E2 heterodimers. The capsid protein binds to the viral RNA genome at a site adjacent to a ribosome binding site for viral genome translation following genome release. Possesses a protease activity that results in its autocatalytic cleavage from the nascent structural protein. Following its self-cleavage, the capsid protein transiently associates with ribosomes, and within several minutes the protein binds to viral RNA and rapidly assembles into icosahedric core particles. The resulting nucleocapsid eventually associates with the cytoplasmic domain of the spike glycoprotein E2 at the cell membrane, leading to budding and formation of mature virions. In case of infection, new virions attach to target cells and after clathrin-mediated endocytosis their membrane fuses with the host endosomal membrane. This leads to the release of the nucleocapsid into the cytoplasm, followed by an uncoating event necessary for the genomic RNA to become accessible. The uncoating might be triggered by the interaction of capsid proteins with ribosomes. Binding of ribosomes would release the genomic RNA since the same region is genomic RNA-binding and ribosome-binding. Specifically inhibits interleukin-1 receptor-associated kinase 1/IRAK1-dependent signaling during viral entry, representing a means by which the alphaviruses may evade innate immune detection and activation prior to viral gene expression. Inhibits host transcription. Forms a tetrameric complex with XPO1/CRM1 and the nuclear import receptor importin. This complex blocks the central channel of host nuclear pores thereby inhibiting the receptor-mediated nuclear transport and thus the host mRNA and rRNA transcription. The inhibition of transcription is linked to a cytopathic effect on the host cell. Provides the signal sequence for the translocation of the precursor of protein E3/E2 to the host endoplasmic reticulum. Furin-cleaved E3 remains associated with spike glycoprotein E1 and mediates pH protection of the latter during the transport via the secretory pathway. After virion release from the host cell, the assembly protein E3 is gradually released in the extracellular space. Functionally, plays a role in viral attachment to target host cell, by binding to the cell receptor LDLRAD3. Synthesized as a p62 precursor which is processed by furin at the cell membrane just before virion budding, giving rise to E2-E1 heterodimer. The p62-E1 heterodimer is stable, whereas E2-E1 is unstable and dissociate at low pH. p62 is processed at the last step, presumably to avoid E1 fusion activation before its final export to cell surface. E2 C-terminus contains a transitory transmembrane that would be disrupted by palmitoylation, resulting in reorientation of the C-terminal tail from lumenal to cytoplasmic side. This step is critical since E2 C-terminus is involved in budding by interacting with capsid proteins. This release of E2 C-terminus in cytoplasm occurs lately in protein export, and precludes premature assembly of particles at the endoplasmic reticulum membrane. Its function is as follows. Acts as a viroporin that participates in virus glycoprotein processing and transport to the plasma membrane, cell permeabilization and budding of viral particles. Disrupts the calcium homeostasis of the cell, probably at the endoplasmic reticulum level. This leads to cytoplasmic calcium elevation. Because of its lipophilic properties, the 6K protein is postulated to influence the selection of lipids that interact with the transmembrane domains of the glycoproteins, which, in turn, affects the deformability of the bilayer required for the extreme curvature that occurs as budding proceeds. Present in low amount in virions, about 3% compared to viral glycoproteins. In terms of biological role, class II viral fusion protein. Fusion activity is inactive as long as E1 is bound to E2 in mature virion. After virus attachment to cell receptor LDLRAD3 and endocytosis, acidification of the endosome induce dissociation of E1/E2 heterodimer and concomitant trimerization of the E1 subunits. This E1 trimer is fusion active, and promotes release of viral nucleocapsid in cytoplasm after endosome and viral membrane fusion. Efficient fusion requires the presence of cholesterol and sphingolipid in the target membrane. The sequence is that of Structural polyprotein from Venezuelan equine encephalitis virus (strain 3880) (VEEV).